The sequence spans 95 residues: UPF0358 protein BCE_3996 (95 aa).

This sequence belongs to the UPF0358 family.

This chain is UPF0358 protein BCE_3996, found in Bacillus cereus (strain ATCC 10987 / NRS 248).